Consider the following 1030-residue polypeptide: Protein phosphatase 1 regulatory subunit 12A (1030 aa).

A KVKF motif motif is present at residues 35-38 (KVKF). ANK repeat units follow at residues 39 to 68 (DDGA…DINY), 72 to 101 (DGLT…NINQ), 105 to 134 (EGWI…HVGA), 138 to 164 (EGDT…RQGV), 198 to 227 (SGGT…DVNI), and 231 to 260 (DGWT…DMEM). Residues Asn67 and Asn100 each carry the (3S)-3-hydroxyasparagine; by HIF1AN; partial modification. Position 226 is a (3S)-3-hydroxyasparagine; by HIF1AN; partial (Asn226). 2 disordered regions span residues 290-628 (LHSE…SVPT) and 643-928 (ASTT…EKDD). Residues 291–300 (HSEKRDKKSP) show a composition bias toward basic and acidic residues. A Phosphoserine modification is found at Ser299. Residues 302 to 316 (IESTANMDNNQSQKT) show a composition bias toward polar residues. The span at 318 to 340 (KNKETLIIEPEKNASRIESLEQE) shows a compositional bias: basic and acidic residues. Acidic residues predominate over residues 357–369 (SEEDEEDDSESEA). The span at 385 to 402 (TSSTQAAPVAVTTPTVSS) shows a compositional bias: low complexity. A phosphoserine mark is found at Ser422 and Ser432. Residues 422-432 (SPKEEERKDES) show a composition bias toward basic and acidic residues. At Thr443 the chain carries Phosphothreonine. Ser445 is subject to Phosphoserine; by NUAK1. Residue Tyr446 is modified to Phosphotyrosine. The span at 469 to 480 (RSASSPRLSSSL) shows a compositional bias: low complexity. Ser472 is modified (phosphoserine; by NUAK1). The residue at position 473 (Ser473) is a Phosphoserine; by CDK1. A Phosphoserine modification is found at Ser477. Positions 481-491 (DNKEKEKDSKG) are enriched in basic and acidic residues. Phosphoserine is present on residues Ser507 and Ser509. Residues 540–551 (NSSVNEGSTYHK) show a composition bias toward polar residues. Residues 564 to 610 (SSSVPSTTSTPTVTSAAGLQKSLLSSTSTTTKITTGSSSAGTQSSTS) show a composition bias toward low complexity. Phosphoserine is present on residues Ser601 and Ser618. Positions 614–625 (WAEDSTEKEKDS) are enriched in basic and acidic residues. A compositionally biased stretch (low complexity) spans 643-660 (ASTTTLTTTTAGTVSSTT). A compositionally biased stretch (basic and acidic residues) spans 673–682 (VRDEESESQR). Residues 682-864 (RKARSRQARQ…VSFWTQDSDE (183 aa)) are interaction with ROCK2. Basic residues predominate over residues 683–693 (KARSRQARQSR). Ser692 and Ser695 each carry phosphoserine; by PKA and PKG; in vitro. Phosphothreonine; by ROCK1, ROCK2, CDC42BP, ZIPK/DAPK3 and RAF1 is present on Thr696. Positions 718–767 (RTREQENEEKEKEEKEKQDKEKQEEKKESETSREDEYKQKYSRTYDETYQ) are enriched in basic and acidic residues. Residues 773 to 795 (STSSSTTPSSSLSTMSSSLYASS) show a composition bias toward low complexity. The span at 796-810 (QLNRPNSLVGITSAY) shows a compositional bias: polar residues. The residue at position 802 (Ser802) is a Phosphoserine. The span at 814 to 840 (ITKENEREGEKREEEKEGEDKSQPKSI) shows a compositional bias: basic and acidic residues. Positions 841–852 (RERRRPREKRRS) are enriched in basic residues. Ser852 carries the post-translational modification Phosphoserine; by ROCK2. The segment covering 861–875 (DSDENEQEQQSDTEE) has biased composition (acidic residues). Phosphoserine occurs at positions 862 and 871. Positions 884–897 (TDSISRYETSSTSA) are enriched in polar residues. A phosphoserine mark is found at Ser903 and Ser908. The segment covering 903 to 913 (SLLGRSGSYSY) has biased composition (low complexity). At Ser910 the chain carries Phosphoserine; by NUAK1. The span at 914 to 928 (LEERKPYSSRLEKDD) shows a compositional bias: basic and acidic residues. Ser995 carries the phosphoserine modification.

As to quaternary structure, PP1 comprises a catalytic subunit, PPP1CA, PPP1CB or PPP1CC, and one or several targeting or regulatory subunits. PPP1R12A mediates binding to myosin. Interacts with ARHA and CIT. Binds PPP1R12B, ROCK1 and IL16. Interacts directly with PRKG1. Non-covalent dimer of 2 dimers; PRKG1-PRKG1 and PPP1R12A-PPP1R12A. Interacts with SMTNL1. Interacts with PPP1CB; the interaction is direct. Interacts (when phosphorylated at Ser-445, Ser-472 and Ser-910) with 14-3-3. Interacts with ROCK1 and ROCK2. Interacts with isoform 1 and isoform 2 of ZIPK/DAPK3. Interacts with RAF1. Interacts with HIF1AN. Interacts with NCKAP1L. In terms of processing, phosphorylated by CIT (Rho-associated kinase). Phosphorylated cooperatively by ROCK1 and CDC42BP on Thr-696. Phosphorylated on upon DNA damage, probably by ATM or ATR. In vitro, phosphorylation of Ser-695 by PKA and PKG appears to prevent phosphorylation of the inhibitory site Thr-696, probably mediated by PRKG1. Phosphorylation at Ser-445, Ser-472 and Ser-910 by NUAK1 promotes interaction with 14-3-3, leading to inhibit interaction with myosin light chain MLC2, preventing dephosphorylation of MLC2. May be phosphorylated at Thr-696 by DMPK; may inhibit the myosin phosphatase activity. Phosphorylated at Ser-473 by CDK1 during mitosis, creating docking sites for the POLO box domains of PLK1. Subsequently, PLK1 binds and phosphorylates PPP1R12A. In terms of tissue distribution, expressed in striated muscles, specifically in type 2a fibers (at protein level).

It localises to the cytoplasm. It is found in the cytoskeleton. The protein localises to the stress fiber. Key regulator of protein phosphatase 1C (PPP1C). Mediates binding to myosin. As part of the PPP1C complex, involved in dephosphorylation of PLK1. Capable of inhibiting HIF1AN-dependent suppression of HIF1A activity. This Homo sapiens (Human) protein is Protein phosphatase 1 regulatory subunit 12A.